Reading from the N-terminus, the 629-residue chain is ATP-dependent RNA helicase DBP6 (629 aa).

Residues 1 to 129 form a disordered region; it reads MFASRFDPSQ…GIEDEAASTH (129 aa). A compositionally biased stretch (acidic residues) spans 72-84; it reads ASEEDSSEVEEEE. S73, S77, and S78 each carry phosphoserine. Residues 88 to 103 show a composition bias toward polar residues; sequence STHSTVLSRFKQTVSL. Acidic residues predominate over residues 116–125; the sequence is KEDEGIEDEA. The Q motif signature appears at 197–205; that stretch reads TFPIQSIIL. One can recognise a Helicase ATP-binding domain in the interval 221-401; the sequence is RNFTRRIGDI…GLNLYKPKLF (181 aa). 234 to 241 contacts ATP; sequence AATGSGKT. The DEAD box motif lies at 341 to 344; that stretch reads DEAD. A Helicase C-terminal domain is found at 437–603; that stretch reads SICQFMAHSP…SVQPLELDFT (167 aa).

It belongs to the DEAD box helicase family. DDX51/DBP6 subfamily. As to quaternary structure, associated with pre-ribosomal particles. Interacts with DBP9 and RSA3. Together with NOP8, URB1, URB2 and RSA3, forms an RNA-independent complex, which is required during early maturation of nascent 60S ribosomal subunits.

The protein localises to the nucleus. The protein resides in the nucleolus. It carries out the reaction ATP + H2O = ADP + phosphate + H(+). ATP-binding RNA helicase involved in the biogenesis of 60S ribosomal subunits and is required for the normal formation of 25S and 5.8S rRNAs. This is ATP-dependent RNA helicase DBP6 (DBP6) from Saccharomyces cerevisiae (strain ATCC 204508 / S288c) (Baker's yeast).